The sequence spans 303 residues: MNDIILKSLSTLITEQRNPNSVDIDRQSTLEIVRLMNEEDKLVPLAIESCLPQISLAVEQIVQAFQQGGRLIYIGAGTSGRLGVLDASECPPTFGVSTEMVKGIIAGGECAIRHPVEGAEDNTKAVLNDLQSIHFSKNDVLVGIAASGRTPYVIAGLQYAKSLGALTISIASNPKSEMAEIADIAIETIVGPEILTGSSRLKSGTAQKMVLNMLTTASMILLGKCYENLMVDVQASNEKLKARAVRIVMQATDCNKTLAEQTLLEADQNAKLAIMMILSTLSKSEAKVLLERHQGKLRNALSK.

The 164-residue stretch at I61 to K224 folds into the SIS domain. E89 functions as the Proton donor in the catalytic mechanism. The active site involves E120.

This sequence belongs to the GCKR-like family. MurNAc-6-P etherase subfamily. In terms of assembly, homodimer.

It carries out the reaction N-acetyl-D-muramate 6-phosphate + H2O = N-acetyl-D-glucosamine 6-phosphate + (R)-lactate. It participates in amino-sugar metabolism; 1,6-anhydro-N-acetylmuramate degradation. It functions in the pathway amino-sugar metabolism; N-acetylmuramate degradation. Its pathway is cell wall biogenesis; peptidoglycan recycling. Specifically catalyzes the cleavage of the D-lactyl ether substituent of MurNAc 6-phosphate, producing GlcNAc 6-phosphate and D-lactate. Together with AnmK, is also required for the utilization of anhydro-N-acetylmuramic acid (anhMurNAc) either imported from the medium or derived from its own cell wall murein, and thus plays a role in cell wall recycling. The chain is N-acetylmuramic acid 6-phosphate etherase (murQ) from Haemophilus influenzae (strain ATCC 51907 / DSM 11121 / KW20 / Rd).